Here is a 304-residue protein sequence, read N- to C-terminus: Iron(III) enterobactin esterase (304 aa).

The signal sequence occupies residues 1–25 (MRTSLLVAALGLALAAALPGGAPLA). Residues serine 182, glutamate 242, and histidine 283 each act as charge relay system in the active site.

This sequence belongs to the esterase D family. In terms of assembly, monomer.

The protein localises to the periplasm. The enzyme catalyses Fe(III)-enterobactin + 3 H2O + H(+) = Fe(III)-[N-(2,3-dihydroxybenzoyl)-L-serine] + 2 N-(2,3-dihydroxybenzoyl)-L-serine. The catalysed reaction is Fe(III)-enterobactin + H2O = Fe(III)-[N-(2,3-dihydroxybenzoyl)-L-serine]3 + H(+). It catalyses the reaction Fe(III)-[N-(2,3-dihydroxybenzoyl)-L-serine]3 + H2O + H(+) = Fe(III)-[N-(2,3-dihydroxybenzoyl)-L-serine]2 + N-(2,3-dihydroxybenzoyl)-L-serine. It carries out the reaction Fe(III)-[N-(2,3-dihydroxybenzoyl)-L-serine]2 + H2O + H(+) = Fe(III)-[N-(2,3-dihydroxybenzoyl)-L-serine] + N-(2,3-dihydroxybenzoyl)-L-serine. Its function is as follows. Catalyzes the hydrolysis of ferric enterobactin (Fe-Ent). Hydrolyzes Fe-Ent into three molecules of 2,3-dihydroxybenzoylserine (DHBS) still complexed with ferric iron. Iron reduction is necessary to obtain complete release of the metal from DHBS. It can hydrolyze salmochelin S4 (diglucosyl-C-Ent) but is not involved in iron acquisition by this siderophore. The polypeptide is Iron(III) enterobactin esterase (Pseudomonas aeruginosa (strain ATCC 15692 / DSM 22644 / CIP 104116 / JCM 14847 / LMG 12228 / 1C / PRS 101 / PAO1)).